Reading from the N-terminus, the 730-residue chain is Zinc finger protein 615 (730 aa).

Residues 7 to 78 (LTLEDVAVDF…EDEIYSRICF (72 aa)) form the KRAB domain. 19 C2H2-type zinc fingers span residues 203–225 (HVCSECGKAFLKLSQFIDHQRVH), 231–253 (HVCSMCGKAFSRKSRLMDHQRTH), 259–281 (YECTECDKTFLKKSQLNIHQKTH), 287–309 (YTCSECGKAFIKKCRLIYHQRTH), 315–337 (HGCSVCGKAFSTKFSLTTHQKTH), 343–365 (YICSECGKGFIEKRRLIAHHRTH), 371–393 (FICNKCGKGFTLKNSLITHQQTH), 399–421 (YTCSECGKGFSMKHCLMVHQRTH), 427–449 (YKCNECGKGFALKSPLIRHQRTH), 455–477 (YVCTECRKGFTMKSDLIVHQRTH), 483–505 (YICNDCGKGFTVKSRLIVHQRTH), 511–533 (YVCGECGKGFPAKIRLMGHQRTH), 539–561 (YICDECGKGFTEKSHLNVHRRTH), 567–589 (YVCSECGKGLTGKSMLIAHQRTH), 595–617 (YICNECGKGFTMKSTLSIHQQTH), 623–645 (YKCNECDKSFRKKTCLIQHQRFH), 651–673 (FACTECGKFSLRKNDLITHQRIH), 679–701 (YKCSDCGKAFTTKSGLNVHQRKH), and 707–729 (YGCSDCGKAFAHLSILVKHKRIH).

The protein belongs to the krueppel C2H2-type zinc-finger protein family.

Its subcellular location is the nucleus. May be involved in transcriptional regulation. This is Zinc finger protein 615 (ZNF615) from Pongo abelii (Sumatran orangutan).